We begin with the raw amino-acid sequence, 459 residues long: Argininosuccinate lyase (459 aa).

Belongs to the lyase 1 family. Argininosuccinate lyase subfamily.

It localises to the cytoplasm. It catalyses the reaction 2-(N(omega)-L-arginino)succinate = fumarate + L-arginine. Its pathway is amino-acid biosynthesis; L-arginine biosynthesis; L-arginine from L-ornithine and carbamoyl phosphate: step 3/3. This is Argininosuccinate lyase from Lactococcus lactis subsp. cremoris (strain MG1363).